A 499-amino-acid chain; its full sequence is Lanosterol 14-alpha demethylase (499 aa).

The helical transmembrane segment at 13–35 (SAVLQMSLTSVLLTASVFTLTLG) threads the bilayer. Residue C441 coordinates heme.

Belongs to the cytochrome P450 family. Heme serves as cofactor. In terms of tissue distribution, strongly expressed in intestine. Moderately expressed in liver, with higher levels in females compared to males. Also detected at low levels in brain, eye, kidney and testis.

Its subcellular location is the endoplasmic reticulum membrane. It localises to the membrane. It carries out the reaction a 14alpha-methyl steroid + 3 reduced [NADPH--hemoprotein reductase] + 3 O2 = a Delta(14) steroid + formate + 3 oxidized [NADPH--hemoprotein reductase] + 4 H2O + 4 H(+). The catalysed reaction is lanosterol + 3 reduced [NADPH--hemoprotein reductase] + 3 O2 = 4,4-dimethyl-5alpha-cholesta-8,14,24-trien-3beta-ol + formate + 3 oxidized [NADPH--hemoprotein reductase] + 4 H2O + 4 H(+). The enzyme catalyses 24,25-dihydrolanosterol + 3 reduced [NADPH--hemoprotein reductase] + 3 O2 = 4,4-dimethyl-8,14-cholestadien-3beta-ol + formate + 3 oxidized [NADPH--hemoprotein reductase] + 4 H2O + 4 H(+). It catalyses the reaction a 14alpha-methyl steroid + reduced [NADPH--hemoprotein reductase] + O2 = a 14alpha-hydroxymethyl steroid + oxidized [NADPH--hemoprotein reductase] + H2O + H(+). It carries out the reaction a 14alpha-hydroxymethyl steroid + reduced [NADPH--hemoprotein reductase] + O2 = a 14alpha-formyl steroid + oxidized [NADPH--hemoprotein reductase] + 2 H2O + H(+). The catalysed reaction is a 14alpha-formyl steroid + reduced [NADPH--hemoprotein reductase] + O2 = a Delta(14) steroid + formate + oxidized [NADPH--hemoprotein reductase] + H2O + 2 H(+). The enzyme catalyses lanosterol + reduced [NADPH--hemoprotein reductase] + O2 = 32-hydroxylanosterol + oxidized [NADPH--hemoprotein reductase] + H2O + H(+). It catalyses the reaction 32-hydroxylanosterol + reduced [NADPH--hemoprotein reductase] + O2 = 32-oxolanosterol + oxidized [NADPH--hemoprotein reductase] + 2 H2O + H(+). It carries out the reaction 32-oxolanosterol + reduced [NADPH--hemoprotein reductase] + O2 = 4,4-dimethyl-5alpha-cholesta-8,14,24-trien-3beta-ol + formate + oxidized [NADPH--hemoprotein reductase] + H2O + 2 H(+). The catalysed reaction is 24,25-dihydrolanosterol + reduced [NADPH--hemoprotein reductase] + O2 = 32-hydroxy-24,25-dihydrolanosterol + oxidized [NADPH--hemoprotein reductase] + H2O + H(+). The enzyme catalyses 32-hydroxy-24,25-dihydrolanosterol + reduced [NADPH--hemoprotein reductase] + O2 = 32-oxo-24,25-dihydrolanosterol + oxidized [NADPH--hemoprotein reductase] + 2 H2O + H(+). It catalyses the reaction 32-oxo-24,25-dihydrolanosterol + reduced [NADPH--hemoprotein reductase] + O2 = 4,4-dimethyl-8,14-cholestadien-3beta-ol + formate + oxidized [NADPH--hemoprotein reductase] + H2O + 2 H(+). The protein operates within steroid biosynthesis; zymosterol biosynthesis; zymosterol from lanosterol: step 1/6. Inhibited by ketoconazole. May also be inhibited to a lesser extent by propiconazole. Sterol 14alpha-demethylase that plays a critical role in the cholesterol biosynthesis pathway, being cholesterol the major sterol component in deuterostome membranes as well as a precursor for steroid hormone synthesis. Cytochrome P450 monooxygenase that catalyzes the three-step oxidative removal of the 14alpha-methyl group (C-32) of sterols such as lanosterol (lanosta-8,24-dien-3beta-ol) and 24,25-dihydrolanosterol (DHL) in the form of formate, and converts the sterols to 4,4-dimethyl-5alpha-cholesta-8,14,24-trien-3beta-ol and 4,4-dimethyl-8,14-cholestadien-3beta-ol, respectively, which are intermediates of cholesterol biosynthesis. Can also demethylate substrates not intrinsic to deuterostomes, such as eburicol (24-methylene-24,25-dihydrolanosterol), but at a lower rate than DHL. The sequence is that of Lanosterol 14-alpha demethylase from Danio rerio (Zebrafish).